The chain runs to 528 residues: G patch domain-containing protein 2 (528 aa).

Residues 36 to 119 (LEESSEQARG…NKKDHSDSDD (84 aa)) form a disordered region. The segment covering 63–77 (RQARKRRGRKRRSYN) has biased composition (basic residues). Over residues 98-117 (EPSKDYRENHNNNKKDHSDS) the composition is skewed to basic and acidic residues. Residues Ser115, Ser117, Ser146, and Ser195 each carry the phosphoserine modification. Disordered stretches follow at residues 232 to 282 (SEET…GDDE) and 487 to 528 (GRDG…GKSA). Residues 239-252 (NKDKMECEEQKVSD) are compositionally biased toward basic and acidic residues. The G-patch domain occupies 467–513 (ENNIGNRMLQNMGWTPGSGLGRDGKGISEPIQAMQRPKGLGLGFPLP). Residues 514–528 (KSTSATTTPNAGKSA) show a composition bias toward polar residues.

In terms of assembly, interacts with DHX15. As to expression, testis.

It is found in the nucleus speckle. Its subcellular location is the nucleus. The protein resides in the nucleolus. Functionally, enhances the ATPase activity of DHX15 in vitro. The protein is G patch domain-containing protein 2 (GPATCH2) of Homo sapiens (Human).